The sequence spans 770 residues: Amyloid-beta precursor protein (770 aa).

The first 17 residues, Met1–Ala17, serve as a signal peptide directing secretion. Residues Leu18–Ala701 lie on the Extracellular side of the membrane. Positions Leu28 to Val123 are GFLD subdomain. One can recognise an E1 domain in the interval Leu28–Leu189. Cystine bridges form between Cys38/Cys62, Cys73/Cys117, Cys98/Cys105, Cys133/Cys187, Cys144/Cys174, and Cys158/Cys186. Position 96–110 (Asn96–His110) interacts with heparin. The interval Asp131–Leu189 is cuBD subdomain. The interval Phe135–Lys155 is copper-binding. 3 residues coordinate Cu(2+): His147, His151, and Tyr168. Residues Gly181–Pro188 form a zinc-binding region. Glu183, Cys186, and Cys187 together coordinate Zn(2+). The span at Ile196–Asp207 shows a compositional bias: acidic residues. The segment at Ile196–Glu284 is disordered. Residue Ser198 is modified to Phosphoserine; by CK2. Ser206 is modified (phosphoserine; by CK1). Residues Tyr217 and Tyr262 each carry the sulfotyrosine modification. Positions Val228–Glu264 are enriched in acidic residues. The span at Arg268–Glu281 shows a compositional bias: low complexity. Intrachain disulfides connect Cys291–Cys341, Cys300–Cys324, and Cys316–Cys337. The BPTI/Kunitz inhibitor domain occupies Cys291–Cys341. Tyr336 is modified (sulfotyrosine). Positions Val344 to Pro365 match the OX-2 motif. The E2 domain occupies Ala374 to Leu565. The tract at residues Phe391–Leu423 is heparin-binding. Ser441 bears the Phosphoserine mark. The interval Phe491–Lys522 is heparin-binding. A Phosphotyrosine modification is found at Tyr497. Residues Ala523–Arg540 form a collagen-binding region. N-linked (GlcNAc...) asparagine glycans are attached at residues Asn542 and Asn571. Cu(2+) is bound by residues His677, Tyr681, His684, and His685. Zn(2+)-binding residues include His677, Tyr681, His684, and His685. The interaction with PSEN1 stretch occupies residues Val695–Met722. A helical membrane pass occupies residues Ile702–Met722. At Leu723–Asn770 the chain is on the cytoplasmic side. The short motif at Lys724–Gly734 is the Basolateral sorting signal element. Thr729 bears the Phosphothreonine mark. Ser730 carries the phosphoserine; by APP-kinase I modification. Residues His732–Lys751 form an interaction with G(o)-alpha region. Thr743 is subject to Phosphothreonine; by CDK5 and MAPK10. The required for the interaction with KIF5B and for anterograde transport in axons stretch occupies residues Gly756 to Asn770. The residue at position 757 (Tyr757) is a Phosphotyrosine; by ABL1. The YENPXY motif; contains endocytosis signal motif lies at Tyr757–Tyr762. Lys763 is covalently cross-linked (Glycyl lysine isopeptide (Lys-Gly) (interchain with G-Cter in ubiquitin)).

This sequence belongs to the APP family. As to quaternary structure, binds, via its C-terminus, to the PID domain of several cytoplasmic proteins, including APBB family members, the APBA family, MAPK8IP1, SHC1 and NUMB and DAB1. Binding to DAB1 inhibits its serine phosphorylation. Interacts (via NPXY motif) with DAB2 (via PID domain); the interaction is impaired by tyrosine phosphorylation of the NPXY motif. Also interacts with GPCR-like protein BPP, APPBP1, IB1, KNS2 (via its TPR domains), APPBP2 (via BaSS) and DDB1. In vitro, it binds MAPT via the MT-binding domains. Associates with microtubules in the presence of ATP and in a kinesin-dependent manner. Interacts, through a C-terminal domain, with GNAO1. Amyloid-beta protein 42 binds CHRNA7 in hippocampal neurons. Amyloid-beta associates with HADH2. Interacts with CPEB1, ANKS1B and AGER. Interacts with ITM2B. Interacts with ITM2C. Interacts with IDE. Can form homodimers; dimerization is enhanced in the presence of Cu(2+) ions. Can form homodimers; this is promoted by heparin binding. Amyloid-beta protein 40 interacts with S100A9. CTF-alpha product of APP interacts with GSAP. Interacts with SORL1 (via N-terminal ectodomain); this interaction retains APP in the trans-Golgi network and reduces processing into soluble APP-alpha and amyloid-beta peptides. The C99 fragment also interacts with SORL1. Interacts with PLD3. Interacts with VDAC1. Interacts with NSG1; could regulate APP processing. Amyloid-beta protein 42 interacts with FPR2. Interacts (via transmembrane region) with PSEN1; the interaction is direct. Interacts with LRRK2. Interacts (via cytoplasmic domain) with KIF5B. Interacts (via C-terminus) with APBB2/FE65L1 (via C-terminus). Interacts (via intracellular domain) with APBB3. Post-translationally, proteolytically processed under normal cellular conditions. Cleavage either by alpha-secretase, beta-secretase or theta-secretase leads to generation and extracellular release of soluble APP peptides, S-APP-alpha and S-APP-beta, and the retention of corresponding membrane-anchored C-terminal fragments, C80, C83 and C99. Subsequent processing of C80 and C83 by gamma-secretase yields P3 peptides. This is the major secretory pathway and is non-amyloidogenic. Alternatively, presenilin/nicastrin-mediated gamma-secretase processing of C99 releases the amyloid-beta proteins, amyloid-beta protein 40 and amyloid-beta protein 42, major components of amyloid plaques, and the cytotoxic C-terminal fragments, gamma-CTF(50), gamma-CTF(57) and gamma-CTF(59). PSEN1 cleavage is more efficient with C83 than with C99 as substrate (in vitro). Amyloid-beta protein 40 and Amyloid-beta protein 42 are cleaved by ACE. Many other minor amyloid-beta peptides, amyloid-beta 1-X peptides, are found in cerebral spinal fluid (CSF) including the amyloid-beta X-15 peptides, produced from the cleavage by alpha-secretase. Proteolytically cleaved by caspases during neuronal apoptosis. Cleavage at Asp-739 by either caspase-3, -8 or -9 results in the production of the neurotoxic C31 peptide and the increased production of amyloid-beta peptides. In terms of processing, N- and O-glycosylated. Post-translationally, phosphorylation in the C-terminal on tyrosine, threonine and serine residues is neuron-specific. Phosphorylation can affect APP processing, neuronal differentiation and interaction with other proteins. Phosphorylated on Thr-743 in neuronal cells by Cdc5 kinase and Mapk10, in dividing cells by Cdc2 kinase in a cell-cycle dependent manner with maximal levels at the G2/M phase and, in vitro, by GSK-3-beta. The Thr-743 phosphorylated form causes a conformational change which reduces binding of Fe65 family members. In dopaminergic (DA) neurons, phosphorylation on Thr-743 by LRKK2 promotes the production and the nuclear translocation of the APP intracellular domain (AICD) which induces DA neuron apoptosis. Phosphorylation on Tyr-757 is required for SHC binding. Phosphorylated in the extracellular domain by casein kinases on both soluble and membrane-bound APP. This phosphorylation is inhibited by heparin. Extracellular binding and reduction of copper, results in a corresponding oxidation of Cys-144 and Cys-158, and the formation of a disulfide bond. In terms of processing, trophic-factor deprivation triggers the cleavage of surface APP by beta-secretase to release sAPP-beta which is further cleaved to release an N-terminal fragment of APP (N-APP). Post-translationally, amyloid-beta peptides are degraded by IDE. Sulfated on tyrosine residues.

It is found in the cell membrane. Its subcellular location is the membrane. The protein localises to the perikaryon. It localises to the cell projection. The protein resides in the growth cone. It is found in the clathrin-coated pit. Its subcellular location is the early endosome. The protein localises to the cytoplasmic vesicle. It localises to the endoplasmic reticulum. The protein resides in the golgi apparatus. It is found in the secreted. Its subcellular location is the cell surface. The protein localises to the nucleus. It localises to the cytoplasm. Functionally, functions as a cell surface receptor and performs physiological functions on the surface of neurons relevant to neurite growth, neuronal adhesion and axonogenesis. Interaction between APP molecules on neighboring cells promotes synaptogenesis. Involved in cell mobility and transcription regulation through protein-protein interactions. Can promote transcription activation through binding to APBB1-KAT5 and inhibit Notch signaling through interaction with Numb. Couples to apoptosis-inducing pathways such as those mediated by G(o) and JIP. Inhibits G(o)-alpha ATPase activity. Acts as a kinesin I membrane receptor, mediating the axonal transport of beta-secretase and presenilin 1. By acting as a kinesin I membrane receptor, plays a role in axonal anterograde transport of cargo towards synapses in axons. May be involved in copper homeostasis/oxidative stress through copper ion reduction. In vitro, copper-metallated APP induces neuronal death directly or is potentiated through Cu(2+)-mediated low-density lipoprotein oxidation. Can regulate neurite outgrowth through binding to components of the extracellular matrix such as heparin and collagen I and IV. Induces a AGER-dependent pathway that involves activation of p38 MAPK, resulting in internalization of amyloid-beta peptide and mitochondrial dysfunction in cultured cortical neurons. Provides Cu(2+) ions for GPC1 which are required for release of nitric oxide (NO) and subsequent degradation of the heparan sulfate chains on GPC1. Amyloid-beta peptides are lipophilic metal chelators with metal-reducing activity. Binds transient metals such as copper, zinc and iron. Its function is as follows. The gamma-CTF peptides as well as the caspase-cleaved peptides, including C31, are potent enhancers of neuronal apoptosis. The sequence is that of Amyloid-beta precursor protein from Sus scrofa (Pig).